The sequence spans 323 residues: Prenyl transferase (323 aa).

K46, R49, and H81 together coordinate isopentenyl diphosphate. Residues D88 and D92 each contribute to the Mg(2+) site. An all-trans-polyprenyl diphosphate is bound at residue R97. An isopentenyl diphosphate-binding site is contributed by R98. An all-trans-polyprenyl diphosphate is bound by residues K174, T175, and Q212.

This sequence belongs to the FPP/GGPP synthase family. Requires Mg(2+) as cofactor.

The protein localises to the plastid. It is found in the cyanelle. Its function is as follows. Possible role in synthesis of the nonaprenyl side chain of plastoquinone or in synthesis of other prenyl chains such as undekaprenyl pyrophosphate. The polypeptide is Prenyl transferase (preA) (Cyanophora paradoxa).